We begin with the raw amino-acid sequence, 757 residues long: Kin of IRRE-like protein 1 (757 aa).

An N-terminal signal peptide occupies residues 1–16 (MLSLLVWILTLSDTFS). The Extracellular portion of the chain corresponds to 17–499 (QGTQTRFSQE…REVLPVGIIA (483 aa)). Ig-like C2-type domains are found at residues 21–115 (TRFS…AKLT), 120–216 (PEDT…TSIE), 223–299 (PTVT…TNVS), 308–387 (PRIV…EVPL), and 392–488 (PPII…IQLE). Cysteines 42 and 100 form a disulfide. 2 N-linked (GlcNAc...) asparagine glycosylation sites follow: N46 and N140. Disulfide bonds link C143/C200 and C244/C287. N297 is a glycosylation site (N-linked (GlcNAc...) asparagine). An intrachain disulfide couples C329 to C371. Positions 405–407 (RGD) match the Cell attachment site motif. Residues C413 and C472 are joined by a disulfide bond. Residue N471 is glycosylated (N-linked (GlcNAc...) asparagine). A helical membrane pass occupies residues 500–520 (GATIGASILLIFFFIALVFFL). The Cytoplasmic segment spans residues 521-757 (YRRRKGSRKD…RFQQRMQTHV (237 aa)). S574 bears the Phosphoserine mark. 2 positions are modified to phosphotyrosine; by FYN: Y605 and Y606. 2 positions are modified to phosphotyrosine: Y622 and Y625. Residues 649 to 679 (QLNTYSRGPASDYGPEPTPPGPAAPAGTDTT) are disordered. Y724 carries the phosphotyrosine modification.

This sequence belongs to the immunoglobulin superfamily. Interacts with TJP1/ZO-1 and with NPHS2/podocin (via the C-terminus). Interacts with NPHS1/nephrin (via the Ig-like domains); this interaction is dependent on KIRREL1 glycosylation. Homodimer (via the Ig-like domains). Interacts when tyrosine-phosphorylated with GRB2. Post-translationally, phosphorylation probably regulates the interaction with NSH2. Phosphorylated at Tyr-605 and Tyr-606 by FYN, leading to GRB2 binding. N-glycosylated. Abundantly expressed in kidney. Specifically expressed in podocytes of kidney glomeruli.

The protein resides in the cell membrane. In terms of biological role, required for proper function of the glomerular filtration barrier. It is involved in the maintenance of a stable podocyte architecture with interdigitating foot processes connected by specialized cell-cell junctions, known as the slit diaphragm. It is a signaling protein that needs the presence of TEC kinases to fully trans-activate the transcription factor AP-1. This chain is Kin of IRRE-like protein 1, found in Homo sapiens (Human).